We begin with the raw amino-acid sequence, 264 residues long: Thymidylate synthase (264 aa).

Arg21 is a binding site for dUMP. A (6R)-5,10-methylene-5,6,7,8-tetrahydrofolate-binding site is contributed by His51. DUMP is bound at residue 126-127; that stretch reads RR. Cys146 acts as the Nucleophile in catalysis. DUMP contacts are provided by residues 166–169, Asn177, and 207–209; these read RSCD and HLY. Asp169 contacts (6R)-5,10-methylene-5,6,7,8-tetrahydrofolate. Residue Ala263 participates in (6R)-5,10-methylene-5,6,7,8-tetrahydrofolate binding.

It belongs to the thymidylate synthase family. Bacterial-type ThyA subfamily. In terms of assembly, homodimer.

The protein resides in the cytoplasm. It carries out the reaction dUMP + (6R)-5,10-methylene-5,6,7,8-tetrahydrofolate = 7,8-dihydrofolate + dTMP. It functions in the pathway pyrimidine metabolism; dTTP biosynthesis. Functionally, catalyzes the reductive methylation of 2'-deoxyuridine-5'-monophosphate (dUMP) to 2'-deoxythymidine-5'-monophosphate (dTMP) while utilizing 5,10-methylenetetrahydrofolate (mTHF) as the methyl donor and reductant in the reaction, yielding dihydrofolate (DHF) as a by-product. This enzymatic reaction provides an intracellular de novo source of dTMP, an essential precursor for DNA biosynthesis. The polypeptide is Thymidylate synthase (Shewanella baltica (strain OS223)).